Here is a 147-residue protein sequence, read N- to C-terminus: MFNMNINSPVRFVKETNRAKSPTRQSPGAAGYDLYSAYDYTIPPGERQLIKTDISMSMPKFCYGRIAPRSGLSLKGIDIGGGVIDEDYRGNIGVILINNGKCTFNVNTGDRIAQLIYQRIYYPELEEVQSLDSTDRGAQGFGSTGLR.

Position 24 (Arg-24) interacts with Mg(2+). DUTP is bound by residues 68 to 70 (PRS), 82 to 85 (GVID), Tyr-88, Gly-93, Ile-95, and Arg-111.

Belongs to the dUTPase family. Mg(2+) serves as cofactor.

It catalyses the reaction dUTP + H2O = dUMP + diphosphate + H(+). This enzyme is involved in nucleotide metabolism: it produces dUMP, the immediate precursor of thymidine nucleotides and it decreases the intracellular concentration of dUTP so that uracil cannot be incorporated into DNA. This is Deoxyuridine 5'-triphosphate nucleotidohydrolase (OPG046) from Bos taurus (Bovine).